The primary structure comprises 316 residues: Cobalamin biosynthesis protein CobD (316 aa).

5 helical membrane-spanning segments follow: residues 45 to 65, 78 to 100, 151 to 171, 209 to 229, and 291 to 311; these read FSPYLFGFFLWLTTVGLALGV, PVLYWLVWIYLAYASLAAKSLAF, DGVIGPLLCLFLGGPILAMTY, LTWLFLILSSQILLLDVKGAL, and ISLLYTSTMTGLILFTLFYLV.

It belongs to the CobD/CbiB family.

Its subcellular location is the cell membrane. The protein operates within cofactor biosynthesis; adenosylcobalamin biosynthesis. Functionally, converts cobyric acid to cobinamide by the addition of aminopropanol on the F carboxylic group. The sequence is that of Cobalamin biosynthesis protein CobD from Streptococcus sanguinis (strain SK36).